The following is a 205-amino-acid chain: Thiamine-phosphate synthase (205 aa).

4-amino-2-methyl-5-(diphosphooxymethyl)pyrimidine contacts are provided by residues 35–39 (QYRDK) and asparagine 67. Mg(2+) is bound by residues aspartate 68 and aspartate 86. Threonine 105 contacts 4-amino-2-methyl-5-(diphosphooxymethyl)pyrimidine. 132–134 (SLT) lines the 2-[(2R,5Z)-2-carboxy-4-methylthiazol-5(2H)-ylidene]ethyl phosphate pocket. Lysine 135 contacts 4-amino-2-methyl-5-(diphosphooxymethyl)pyrimidine. Glycine 162 provides a ligand contact to 2-[(2R,5Z)-2-carboxy-4-methylthiazol-5(2H)-ylidene]ethyl phosphate.

Belongs to the thiamine-phosphate synthase family. Mg(2+) serves as cofactor.

It carries out the reaction 2-[(2R,5Z)-2-carboxy-4-methylthiazol-5(2H)-ylidene]ethyl phosphate + 4-amino-2-methyl-5-(diphosphooxymethyl)pyrimidine + 2 H(+) = thiamine phosphate + CO2 + diphosphate. The catalysed reaction is 2-(2-carboxy-4-methylthiazol-5-yl)ethyl phosphate + 4-amino-2-methyl-5-(diphosphooxymethyl)pyrimidine + 2 H(+) = thiamine phosphate + CO2 + diphosphate. It catalyses the reaction 4-methyl-5-(2-phosphooxyethyl)-thiazole + 4-amino-2-methyl-5-(diphosphooxymethyl)pyrimidine + H(+) = thiamine phosphate + diphosphate. It participates in cofactor biosynthesis; thiamine diphosphate biosynthesis; thiamine phosphate from 4-amino-2-methyl-5-diphosphomethylpyrimidine and 4-methyl-5-(2-phosphoethyl)-thiazole: step 1/1. Condenses 4-methyl-5-(beta-hydroxyethyl)thiazole monophosphate (THZ-P) and 2-methyl-4-amino-5-hydroxymethyl pyrimidine pyrophosphate (HMP-PP) to form thiamine monophosphate (TMP). This chain is Thiamine-phosphate synthase, found in Pseudomonas syringae pv. syringae (strain B728a).